Consider the following 427-residue polypeptide: 3-phosphoshikimate 1-carboxyvinyltransferase (427 aa).

3 residues coordinate 3-phosphoshikimate: Lys23, Ser24, and Arg28. Residue Lys23 coordinates phosphoenolpyruvate. Phosphoenolpyruvate is bound by residues Gly97 and Arg125. 3-phosphoshikimate-binding residues include Ser170, Ser171, Gln172, Ser198, Asp314, Asn337, and Lys341. Gln172 contributes to the phosphoenolpyruvate binding site. The active-site Proton acceptor is the Asp314. Phosphoenolpyruvate is bound by residues Arg345, Arg387, and Lys412.

It belongs to the EPSP synthase family. In terms of assembly, monomer.

Its subcellular location is the cytoplasm. It carries out the reaction 3-phosphoshikimate + phosphoenolpyruvate = 5-O-(1-carboxyvinyl)-3-phosphoshikimate + phosphate. It functions in the pathway metabolic intermediate biosynthesis; chorismate biosynthesis; chorismate from D-erythrose 4-phosphate and phosphoenolpyruvate: step 6/7. Its function is as follows. Catalyzes the transfer of the enolpyruvyl moiety of phosphoenolpyruvate (PEP) to the 5-hydroxyl of shikimate-3-phosphate (S3P) to produce enolpyruvyl shikimate-3-phosphate and inorganic phosphate. The sequence is that of 3-phosphoshikimate 1-carboxyvinyltransferase from Buchnera aphidicola subsp. Acyrthosiphon pisum (strain 5A).